The following is a 337-amino-acid chain: Probable dihydroorotase (337 aa).

6 residues coordinate Zn(2+): His-12, His-14, Lys-95, His-132, His-170, and Asp-240. At Lys-95 the chain carries N6-carboxylysine.

It belongs to the metallo-dependent hydrolases superfamily. DHOase family. Class II DHOase subfamily. Requires Zn(2+) as cofactor.

It carries out the reaction (S)-dihydroorotate + H2O = N-carbamoyl-L-aspartate + H(+). It participates in pyrimidine metabolism; UMP biosynthesis via de novo pathway; (S)-dihydroorotate from bicarbonate: step 3/3. The protein is Probable dihydroorotase (ura2) of Schizosaccharomyces pombe (strain 972 / ATCC 24843) (Fission yeast).